The sequence spans 270 residues: UPF0354 protein BCG9842_B0431 (270 aa).

This sequence belongs to the UPF0354 family.

This is UPF0354 protein BCG9842_B0431 from Bacillus cereus (strain G9842).